The following is a 314-amino-acid chain: Aspartate carbamoyltransferase catalytic subunit (314 aa).

2 residues coordinate carbamoyl phosphate: Arg58 and Thr59. Lys86 provides a ligand contact to L-aspartate. Carbamoyl phosphate contacts are provided by Arg108, His136, and Gln139. The L-aspartate site is built by Arg169 and Arg223. Residues Gly264 and Pro265 each contribute to the carbamoyl phosphate site.

This sequence belongs to the aspartate/ornithine carbamoyltransferase superfamily. ATCase family. In terms of assembly, heterododecamer (2C3:3R2) of six catalytic PyrB chains organized as two trimers (C3), and six regulatory PyrI chains organized as three dimers (R2).

It carries out the reaction carbamoyl phosphate + L-aspartate = N-carbamoyl-L-aspartate + phosphate + H(+). It participates in pyrimidine metabolism; UMP biosynthesis via de novo pathway; (S)-dihydroorotate from bicarbonate: step 2/3. Functionally, catalyzes the condensation of carbamoyl phosphate and aspartate to form carbamoyl aspartate and inorganic phosphate, the committed step in the de novo pyrimidine nucleotide biosynthesis pathway. The chain is Aspartate carbamoyltransferase catalytic subunit from Opitutus terrae (strain DSM 11246 / JCM 15787 / PB90-1).